Reading from the N-terminus, the 221-residue chain is Uracil-DNA glycosylase 1 (221 aa).

Asp-61 acts as the Proton acceptor in catalysis.

This sequence belongs to the uracil-DNA glycosylase (UDG) superfamily. UNG family.

It is found in the cytoplasm. The catalysed reaction is Hydrolyzes single-stranded DNA or mismatched double-stranded DNA and polynucleotides, releasing free uracil.. Its function is as follows. Excises uracil residues from the DNA which can arise as a result of misincorporation of dUMP residues by DNA polymerase or due to deamination of cytosine. This chain is Uracil-DNA glycosylase 1, found in Listeria innocua serovar 6a (strain ATCC BAA-680 / CLIP 11262).